Here is a 108-residue protein sequence, read N- to C-terminus: Large ribosomal subunit protein uL24 (108 aa).

Belongs to the universal ribosomal protein uL24 family. Part of the 50S ribosomal subunit.

Its function is as follows. One of two assembly initiator proteins, it binds directly to the 5'-end of the 23S rRNA, where it nucleates assembly of the 50S subunit. Functionally, one of the proteins that surrounds the polypeptide exit tunnel on the outside of the subunit. The chain is Large ribosomal subunit protein uL24 from Pelobacter propionicus (strain DSM 2379 / NBRC 103807 / OttBd1).